Consider the following 440-residue polypeptide: uncharacterized protein (440 aa).

The N-terminal stretch at 1-29 (MLRLQMMEGLIVKRTLLLILLLVISVSYA) is a signal peptide.

Belongs to the Mj S-layer protein family.

This is an uncharacterized protein from Methanocaldococcus jannaschii (strain ATCC 43067 / DSM 2661 / JAL-1 / JCM 10045 / NBRC 100440) (Methanococcus jannaschii).